Consider the following 355-residue polypeptide: DNA-directed RNA polymerase subunit alpha (355 aa).

The interval 1-233 is alpha N-terminal domain (alpha-NTD); that stretch reads MVREKVRVST…DLFIPFLHKE (233 aa). Residues 268 to 355 are alpha C-terminal domain (alpha-CTD); it reads KKKIALKSIF…EIYCYSIFFH (88 aa).

This sequence belongs to the RNA polymerase alpha chain family. As to quaternary structure, in plastids the minimal PEP RNA polymerase catalytic core is composed of four subunits: alpha, beta, beta', and beta''. When a (nuclear-encoded) sigma factor is associated with the core the holoenzyme is formed, which can initiate transcription.

It is found in the plastid. It localises to the chloroplast. The catalysed reaction is RNA(n) + a ribonucleoside 5'-triphosphate = RNA(n+1) + diphosphate. In terms of biological role, DNA-dependent RNA polymerase catalyzes the transcription of DNA into RNA using the four ribonucleoside triphosphates as substrates. In Jasminum nudiflorum (Winter jasmine), this protein is DNA-directed RNA polymerase subunit alpha.